The sequence spans 263 residues: Tryptophan synthase alpha chain (263 aa).

Catalysis depends on proton acceptor residues E49 and D60.

This sequence belongs to the TrpA family. As to quaternary structure, tetramer of two alpha and two beta chains.

The catalysed reaction is (1S,2R)-1-C-(indol-3-yl)glycerol 3-phosphate + L-serine = D-glyceraldehyde 3-phosphate + L-tryptophan + H2O. It participates in amino-acid biosynthesis; L-tryptophan biosynthesis; L-tryptophan from chorismate: step 5/5. In terms of biological role, the alpha subunit is responsible for the aldol cleavage of indoleglycerol phosphate to indole and glyceraldehyde 3-phosphate. This Clostridium kluyveri (strain NBRC 12016) protein is Tryptophan synthase alpha chain.